An 88-amino-acid chain; its full sequence is Small ribosomal subunit protein bS16 (88 aa).

This sequence belongs to the bacterial ribosomal protein bS16 family.

The protein is Small ribosomal subunit protein bS16 of Baumannia cicadellinicola subsp. Homalodisca coagulata.